Here is a 510-residue protein sequence, read N- to C-terminus: Replication factor C large subunit (510 aa).

48–55 (GPPGTGKT) is a binding site for ATP. The segment at 459 to 510 (MESMLERKREESEVEEEAKEIEEAVEKAEEEEEREEKKKEGGGEQRTLDAFF) is disordered. The segment covering 493-510 (EEKKKEGGGEQRTLDAFF) has biased composition (basic and acidic residues).

Belongs to the activator 1 small subunits family. RfcL subfamily. Heteromultimer composed of small subunits (RfcS) and large subunits (RfcL).

In terms of biological role, part of the RFC clamp loader complex which loads the PCNA sliding clamp onto DNA. This is Replication factor C large subunit from Methanopyrus kandleri (strain AV19 / DSM 6324 / JCM 9639 / NBRC 100938).